Consider the following 76-residue polypeptide: UPF0270 protein PSPA7_1664 (76 aa).

It belongs to the UPF0270 family.

The sequence is that of UPF0270 protein PSPA7_1664 from Pseudomonas paraeruginosa (strain DSM 24068 / PA7) (Pseudomonas aeruginosa (strain PA7)).